We begin with the raw amino-acid sequence, 145 residues long: Toxin Res (145 aa).

The protein belongs to the MbcT/ParT/Res family. As to quaternary structure, homodimer. Forms a complex with cognate antitoxin Xre; the 2 toxin molecules dimerize and each contacts an Xre homodimer. Most Res-Xre contacts are between the antitoxin molecule closest to the toxin.

Toxic component of a type II toxin-antitoxin (TA) system. Expression in E.coli inhibits cell growth. In vivo it is probably neutralized by cognate antitoxin Xre; this has not been shown upon expression in E.coli. Probably depletes intracellular NAD(+). In Pseudomonas putida (strain ATCC 47054 / DSM 6125 / CFBP 8728 / NCIMB 11950 / KT2440), this protein is Toxin Res.